The chain runs to 216 residues: Soluble inorganic pyrophosphatase 3 (216 aa).

Residues 1-10 show a composition bias toward acidic residues; the sequence is MSEEAYEETQ. The disordered stretch occupies residues 1 to 21; the sequence is MSEEAYEETQESSQSPRPVPK. Residues Lys-66 and Arg-80 each coordinate substrate. Catalysis depends on Tyr-88, which acts as the Proton donor. Tyr-92 contributes to the substrate binding site. The Mg(2+) site is built by Asp-102, Asp-107, and Asp-139. Tyr-176 provides a ligand contact to substrate.

The protein belongs to the PPase family. It depends on Mg(2+) as a cofactor. Expressed preferentially in stamen, pollen and flower, and at a low level in lateral roots and root elongation zones.

It is found in the cytoplasm. The catalysed reaction is diphosphate + H2O = 2 phosphate + H(+). This is Soluble inorganic pyrophosphatase 3 from Arabidopsis thaliana (Mouse-ear cress).